Here is a 414-residue protein sequence, read N- to C-terminus: E3 ubiquitin-protein ligase makorin-2 (414 aa).

2 consecutive C3H1-type zinc fingers follow at residues 2–29 (STKQVTCRYFLHGVCREGSRCLFSHDLT) and 31–58 (SKPSTICKYYQRGACAYGDRCRYDHIKP). Residues 57–94 (KPPGRGSGAPADHSNRSSSSAGASAPGPGPPANTSKHL) form a disordered region. Positions 73-82 (SSSSAGASAP) are enriched in low complexity. A C3H1-type 3 zinc finger spans residues 164–191 (QTSPQICPFLAAGQCQYGESCPYLHGEM). The makorin-type Cys-His stretch occupies residues 192 to 221 (CEICRQHVLHPHDPEQRAAHEKKCMVAFEM). The RING-type zinc finger occupies 237-291 (CKICLDVVYEKSSPSERRFGILSSCAHTYCLNCIRQWRCVEQLHNQIRKSCPECR). Residues 320 to 349 (GVSKKACKYFDQGRGTCPFGGKCFYMHAYA) form a C3H1-type 4 zinc finger.

The protein localises to the cytoplasm. It localises to the nucleus. It catalyses the reaction S-ubiquitinyl-[E2 ubiquitin-conjugating enzyme]-L-cysteine + [acceptor protein]-L-lysine = [E2 ubiquitin-conjugating enzyme]-L-cysteine + N(6)-ubiquitinyl-[acceptor protein]-L-lysine.. It functions in the pathway protein modification; protein ubiquitination. Functionally, E3 ubiquitin ligase catalyzing the covalent attachment of ubiquitin moieties onto substrate proteins. Inhibits neurogenesis and axis formation during embryonic development by modulating the phosphatidylinositol 3-kinase (PI3K) pathway. Acts downstream of PI3K and akt1 to up-regulate gsk3b mRNA expression. The protein is E3 ubiquitin-protein ligase makorin-2 (mkrn2) of Danio rerio (Zebrafish).